Reading from the N-terminus, the 79-residue chain is Short neurotoxin 8 (79 aa).

An N-terminal signal peptide occupies residues 1-21; the sequence is MKTLLLTLVMVTIMCLDLGYT. Disulfide bonds link Cys24–Cys41, Cys34–Cys59, Cys63–Cys71, and Cys72–Cys77.

The protein belongs to the three-finger toxin family. Short-chain subfamily. Type III alpha-neurotoxin sub-subfamily. As to expression, expressed by the venom gland.

The protein resides in the secreted. Its function is as follows. Binds with high affinity to muscle nicotinic acetylcholine receptor (nAChR) and hinders acetylcholine binding to the receptor, thereby impairing neuromuscular transmission. Causes muscle paralysis, spasms and increased respiration. The protein is Short neurotoxin 8 of Pseudonaja textilis (Eastern brown snake).